We begin with the raw amino-acid sequence, 88 residues long: Probable Fe(2+)-trafficking protein (88 aa).

This sequence belongs to the Fe(2+)-trafficking protein family.

Its function is as follows. Could be a mediator in iron transactions between iron acquisition and iron-requiring processes, such as synthesis and/or repair of Fe-S clusters in biosynthetic enzymes. The polypeptide is Probable Fe(2+)-trafficking protein (Neisseria gonorrhoeae (strain ATCC 700825 / FA 1090)).